The following is a 720-amino-acid chain: Photosystem I P700 chlorophyll a apoprotein A1 (720 aa).

Helical transmembrane passes span 61-84 (VFSAHFGQLAIIFIWLSGMYFHGA), 147-170 (LYCTAIGALIFAALMLFAGWFHYH), 186-210 (LNHHLAGLLGLGSLSWAGHQIHVSL), 282-300 (TAHHHLAIAILFLIAGHMY), 337-360 (WHAQLALNLAMLGSLTIVVAHHMY), 376-402 (LSLFTHHMWIGGFLIVGAAAHAAIFMV), 424-446 (AIVSHLNWACIFLGFHSFGLYIH), and 522-540 (FLVHHIHAFTIHVTVLILL). 2 residues coordinate [4Fe-4S] cluster: Cys564 and Cys573. A run of 2 helical transmembrane segments spans residues 580 to 601 (HVFLGLFWMYNAISVVIFHFSW) and 655 to 677 (LSAYGLLFLGAHFVWAFSLMFLF). Residue His666 coordinates chlorophyll a'. 2 residues coordinate chlorophyll a: Met674 and Tyr682. Trp683 contributes to the phylloquinone binding site. Residues 715–720 (AVGVAH) form a helical membrane-spanning segment.

The protein belongs to the PsaA/PsaB family. As to quaternary structure, the PsaA/B heterodimer binds the P700 chlorophyll special pair and subsequent electron acceptors. PSI consists of a core antenna complex that captures photons, and an electron transfer chain that converts photonic excitation into a charge separation. The eukaryotic PSI reaction center is composed of at least 11 subunits. The cofactor is P700 is a chlorophyll a/chlorophyll a' dimer, A0 is one or more chlorophyll a, A1 is one or both phylloquinones and FX is a shared 4Fe-4S iron-sulfur center..

Its subcellular location is the plastid. The protein localises to the chloroplast thylakoid membrane. It carries out the reaction reduced [plastocyanin] + hnu + oxidized [2Fe-2S]-[ferredoxin] = oxidized [plastocyanin] + reduced [2Fe-2S]-[ferredoxin]. Its function is as follows. PsaA and PsaB bind P700, the primary electron donor of photosystem I (PSI), as well as the electron acceptors A0, A1 and FX. PSI is a plastocyanin-ferredoxin oxidoreductase, converting photonic excitation into a charge separation, which transfers an electron from the donor P700 chlorophyll pair to the spectroscopically characterized acceptors A0, A1, FX, FA and FB in turn. Oxidized P700 is reduced on the lumenal side of the thylakoid membrane by plastocyanin. The polypeptide is Photosystem I P700 chlorophyll a apoprotein A1 (Sequoia sempervirens (California redwood)).